The sequence spans 332 residues: Ketol-acid reductoisomerase (NADP(+)) (332 aa).

Residues 1 to 182 (MAQVWKDAEI…GSARAGLIKT (182 aa)) enclose the KARI N-terminal Rossmann domain. NADP(+)-binding positions include 25-28 (YGIQ), Lys48, Ser53, and 83-86 (DMIQ). His108 is a catalytic residue. An NADP(+)-binding site is contributed by Gly134. In terms of domain architecture, KARI C-terminal knotted spans 183–329 (TFKEEVETDW…RKMRKMMWPD (147 aa)). Mg(2+) contacts are provided by Asp191, Glu195, Glu227, and Glu231. A substrate-binding site is contributed by Ser252.

It belongs to the ketol-acid reductoisomerase family. Mg(2+) is required as a cofactor.

The enzyme catalyses (2R)-2,3-dihydroxy-3-methylbutanoate + NADP(+) = (2S)-2-acetolactate + NADPH + H(+). It carries out the reaction (2R,3R)-2,3-dihydroxy-3-methylpentanoate + NADP(+) = (S)-2-ethyl-2-hydroxy-3-oxobutanoate + NADPH + H(+). It participates in amino-acid biosynthesis; L-isoleucine biosynthesis; L-isoleucine from 2-oxobutanoate: step 2/4. It functions in the pathway amino-acid biosynthesis; L-valine biosynthesis; L-valine from pyruvate: step 2/4. Its function is as follows. Involved in the biosynthesis of branched-chain amino acids (BCAA). Catalyzes an alkyl-migration followed by a ketol-acid reduction of (S)-2-acetolactate (S2AL) to yield (R)-2,3-dihydroxy-isovalerate. In the isomerase reaction, S2AL is rearranged via a Mg-dependent methyl migration to produce 3-hydroxy-3-methyl-2-ketobutyrate (HMKB). In the reductase reaction, this 2-ketoacid undergoes a metal-dependent reduction by NADPH to yield (R)-2,3-dihydroxy-isovalerate. This is Ketol-acid reductoisomerase (NADP(+)) from Cenarchaeum symbiosum (strain A).